We begin with the raw amino-acid sequence, 251 residues long: tRNA (guanine-N(7)-)-methyltransferase (251 aa).

The segment at 1–29 is disordered; sequence MTQTLSSQDPQAPAAPPMPGAAGSAPADV. Positions 84, 109, 136, and 159 each coordinate S-adenosyl-L-methionine. The active site involves D159. Residue K163 coordinates substrate. Residues 165–170 are interaction with RNA; the sequence is RHNKRR. Substrate-binding positions include D195 and 230–233; that span reads TKFE.

The protein belongs to the class I-like SAM-binding methyltransferase superfamily. TrmB family.

The enzyme catalyses guanosine(46) in tRNA + S-adenosyl-L-methionine = N(7)-methylguanosine(46) in tRNA + S-adenosyl-L-homocysteine. It functions in the pathway tRNA modification; N(7)-methylguanine-tRNA biosynthesis. Functionally, catalyzes the formation of N(7)-methylguanine at position 46 (m7G46) in tRNA. This is tRNA (guanine-N(7)-)-methyltransferase from Acidovorax sp. (strain JS42).